The primary structure comprises 3119 residues: Huntingtin (3119 aa).

A disordered region spans residues 1–65 (MATLEKLMKA…LPGPAEEPLH (65 aa)). N6-acetyllysine is present on K9. Over residues 24-60 (QPPPQAPPPPPPPPPQPPQPPPQGQPPPPPPPLPGPA) the composition is skewed to pro residues. An N6-acetyllysine mark is found at K155 and K213. HEAT repeat units follow at residues 183-220 (PYLV…SFGN) and 225-262 (NEIK…HSRR). K322 carries the N6-acetyllysine modification. S396, S398, and S411 each carry phosphoserine. K421 is subject to N6-acetyllysine. An interaction with ZDHHC17 region spans residues 470-481 (GHDIITEQPRSQ). The tract at residues 495–558 (DLTSAATDGD…DSAVTPSDSS (64 aa)) is disordered. The segment covering 529 to 558 (DGTQASSPISDSSQTTTEGPDSAVTPSDSS) has biased composition (polar residues). G530 carries N-myristoyl glycine lipidation. A phosphoserine mark is found at S620 and S623. HEAT repeat units lie at residues 782–819 (FSLV…SLCS) and 882–920 (KLQE…KLFY). The segment at 1146–1204 (KAALPSLTNPPSLSPIRRKGKEKEPGEQASTPMSPKKVGEASAASRQSDTSGPVTASKS) is disordered. Low complexity predominate over residues 1149–1160 (LPSLTNPPSLSP). S1159 and S1179 each carry phosphoserine; by CDK5. The segment covering 1189-1204 (ASRQSDTSGPVTASKS) has biased composition (polar residues). The HEAT 5 repeat unit spans residues 1404–1441 (LFEPLVIKALKQYTTTTSVQLQKQVLDLLAQLVQLRVN). A Phosphoserine modification is found at S1853. The short motif at 2372–2381 (IVISLARLPL) is the Nuclear export signal element. Residues 2610-2637 (EEEWDEEEEEESDVPAPTSPPVSPVNSR) form a disordered region. Residues 2611-2622 (EEWDEEEEEESD) show a composition bias toward acidic residues.

Belongs to the huntingtin family. As to quaternary structure, interacts with PFN1. Interacts through its N-terminus with PRPF40A. Interacts with PQBP1. Interacts with SETD2. Interacts with SH3GLB1. Interacts with SYVN. Interacts with TPR; the interaction is inhibited by forms of Huntingtin with expanded polyglutamine stretch. Interacts with ZDHHC13 (via ANK repeats). Interacts with ZDHHC17 (via ANK repeats). Interacts with F8A1/F8A2/F8A3. Found in a complex with F8A1/F8A2/F8A3, HTT and RAB5A; mediates the recruitment of HTT by RAB5A. In terms of processing, phosphorylation at Ser-1159 and Ser-1179 by CDK5 in response to DNA damage in nuclei of neurons protects neurons against polyglutamine expansion as well as DNA damage mediated toxicity. Post-translationally, cleaved by caspases downstream of the polyglutamine stretch. Myristoylated at Gly-530, following proteolytic cleavage at Asp-529. In terms of tissue distribution, the highest level is seen throughout the brain, but it is also found in the stomach, heart, testis, adipose tissue, muscle, spleen, liver, and kidney.

The protein localises to the cytoplasm. It localises to the nucleus. Its subcellular location is the cytoplasmic vesicle. The protein resides in the autophagosome. Its function is as follows. May play a role in microtubule-mediated transport or vesicle function. In terms of biological role, promotes the formation of autophagic vesicles. The polypeptide is Huntingtin (Htt) (Mus musculus (Mouse)).